Consider the following 149-residue polypeptide: Protein E6 (149 aa).

Zinc fingers lie at residues 30–66 and 103–139; these read CVYCKGQLTETEVLDFAFTDLTIVYRDDTPHGVCTKC and CITCQRPLCPEEKQRHLDKKKRFHNIGGRWTGRCIAC. A PDZ-binding domain motif is present at residues 147-149; sequence TQV.

This sequence belongs to the papillomaviridae E6 protein family. Forms homodimers. Interacts with ubiquitin-protein ligase UBE3A/E6-AP and thus forms a complex with human TP53. Interacts with human NFX1 and MAGI3. Interacts with human IRF3; this interaction inhibits the establishment of antiviral state. Interacts with human TYK2; this interaction inhibits JAK-STAT activation by interferon alpha. Interacts with host DLG1; this interaction leads to the proteasomal degradation of DLG1.

It is found in the host cytoplasm. Its subcellular location is the host nucleus. In terms of biological role, plays a major role in the induction and maintenance of cellular transformation. Acts mainly as an oncoprotein by stimulating the destruction of many host cell key regulatory proteins. E6 associates with host UBE3A/E6-AP ubiquitin-protein ligase, and inactivates tumor suppressors TP53 and TP73 by targeting them to the 26S proteasome for degradation. In turn, DNA damage and chromosomal instabilities increase and lead to cell proliferation and cancer development. The complex E6/E6AP targets several other substrates to degradation via the proteasome including host DLG1 or NFX1, a repressor of human telomerase reverse transcriptase (hTERT). The resulting increased expression of hTERT prevents the shortening of telomere length leading to cell immortalization. Other cellular targets including BAK1, Fas-associated death domain-containing protein (FADD) and procaspase 8, are degraded by E6/E6AP causing inhibition of apoptosis. E6 also inhibits immune response by interacting with host IRF3 and TYK2. These interactions prevent IRF3 transcriptional activities and inhibit TYK2-mediated JAK-STAT activation by interferon alpha resulting in inhibition of the interferon signaling pathway. This Human papillomavirus 31 protein is Protein E6.